The sequence spans 291 residues: 4-hydroxy-tetrahydrodipicolinate synthase (291 aa).

Threonine 44 is a binding site for pyruvate. Tyrosine 132 functions as the Proton donor/acceptor in the catalytic mechanism. The Schiff-base intermediate with substrate role is filled by lysine 160. Isoleucine 202 provides a ligand contact to pyruvate.

Belongs to the DapA family. As to quaternary structure, homotetramer; dimer of dimers.

The protein localises to the cytoplasm. It carries out the reaction L-aspartate 4-semialdehyde + pyruvate = (2S,4S)-4-hydroxy-2,3,4,5-tetrahydrodipicolinate + H2O + H(+). Its pathway is amino-acid biosynthesis; L-lysine biosynthesis via DAP pathway; (S)-tetrahydrodipicolinate from L-aspartate: step 3/4. Catalyzes the condensation of (S)-aspartate-beta-semialdehyde [(S)-ASA] and pyruvate to 4-hydroxy-tetrahydrodipicolinate (HTPA). This chain is 4-hydroxy-tetrahydrodipicolinate synthase, found in Zymomonas mobilis subsp. mobilis (strain ATCC 31821 / ZM4 / CP4).